The primary structure comprises 512 residues: Glutathione-binding protein GsiB (512 aa).

An N-terminal signal peptide occupies residues 1 to 26; sequence MARAVHRSGLVALGIATALMASCAFA.

Belongs to the bacterial solute-binding protein 5 family. The complex is composed of two ATP-binding proteins (GsiA), two transmembrane proteins (GsiC and GsiD) and a solute-binding protein (GsiB). In the presence of glutathione, interacts with the transmembrane proteins GsiC and GsiD.

It localises to the periplasm. In terms of biological role, part of the ABC transporter complex GsiABCD involved in glutathione import. Binds glutathione. This is Glutathione-binding protein GsiB from Escherichia coli (strain K12).